Here is a 156-residue protein sequence, read N- to C-terminus: Small ribosomal subunit protein uS7 (156 aa).

This sequence belongs to the universal ribosomal protein uS7 family. As to quaternary structure, part of the 30S ribosomal subunit. Contacts proteins S9 and S11.

Its function is as follows. One of the primary rRNA binding proteins, it binds directly to 16S rRNA where it nucleates assembly of the head domain of the 30S subunit. Is located at the subunit interface close to the decoding center, probably blocks exit of the E-site tRNA. This Parasynechococcus marenigrum (strain WH8102) protein is Small ribosomal subunit protein uS7.